The primary structure comprises 182 residues: Nucleoside-triphosphatase THEP1 (182 aa).

Residues 10-17 and 102-109 each bind ATP; these read GRPGIGKT and VVVIDEIG.

The protein belongs to the THEP1 NTPase family.

The catalysed reaction is a ribonucleoside 5'-triphosphate + H2O = a ribonucleoside 5'-diphosphate + phosphate + H(+). Functionally, has nucleotide phosphatase activity towards ATP, GTP, CTP, TTP and UTP. May hydrolyze nucleoside diphosphates with lower efficiency. The polypeptide is Nucleoside-triphosphatase THEP1 (Thermofilum pendens (strain DSM 2475 / Hrk 5)).